The chain runs to 451 residues: Phosphoglucosamine mutase (451 aa).

Serine 102 serves as the catalytic Phosphoserine intermediate. Mg(2+) is bound by residues serine 102, aspartate 242, aspartate 244, and aspartate 246. Position 102 is a phosphoserine (serine 102).

Belongs to the phosphohexose mutase family. Requires Mg(2+) as cofactor. In terms of processing, activated by phosphorylation.

It catalyses the reaction alpha-D-glucosamine 1-phosphate = D-glucosamine 6-phosphate. Its function is as follows. Catalyzes the conversion of glucosamine-6-phosphate to glucosamine-1-phosphate. In Staphylococcus aureus (strain USA300), this protein is Phosphoglucosamine mutase.